The primary structure comprises 491 residues: Ketol-acid reductoisomerase (NADP(+)) (491 aa).

Positions 15–208 (AQLGKCRFMA…GGHRAGVLES (194 aa)) constitute a KARI N-terminal Rossmann domain. NADP(+)-binding positions include 45-48 (CGAQ), Arg68, Arg76, Ser78, and 108-110 (DKQ). Residue His132 is part of the active site. Gly158 provides a ligand contact to NADP(+). 2 consecutive KARI C-terminal knotted domains span residues 209 to 344 (SFVA…TASQ) and 345 to 484 (FDGK…MKDM). Mg(2+)-binding residues include Asp217, Glu221, Glu389, and Glu393. Ser414 is a binding site for substrate.

It belongs to the ketol-acid reductoisomerase family. Mg(2+) serves as cofactor.

The catalysed reaction is (2R)-2,3-dihydroxy-3-methylbutanoate + NADP(+) = (2S)-2-acetolactate + NADPH + H(+). It carries out the reaction (2R,3R)-2,3-dihydroxy-3-methylpentanoate + NADP(+) = (S)-2-ethyl-2-hydroxy-3-oxobutanoate + NADPH + H(+). It participates in amino-acid biosynthesis; L-isoleucine biosynthesis; L-isoleucine from 2-oxobutanoate: step 2/4. Its pathway is amino-acid biosynthesis; L-valine biosynthesis; L-valine from pyruvate: step 2/4. In terms of biological role, involved in the biosynthesis of branched-chain amino acids (BCAA). Catalyzes an alkyl-migration followed by a ketol-acid reduction of (S)-2-acetolactate (S2AL) to yield (R)-2,3-dihydroxy-isovalerate. In the isomerase reaction, S2AL is rearranged via a Mg-dependent methyl migration to produce 3-hydroxy-3-methyl-2-ketobutyrate (HMKB). In the reductase reaction, this 2-ketoacid undergoes a metal-dependent reduction by NADPH to yield (R)-2,3-dihydroxy-isovalerate. The protein is Ketol-acid reductoisomerase (NADP(+)) of Enterobacter sp. (strain 638).